The primary structure comprises 289 residues: Diaminopimelate epimerase (289 aa).

Substrate contacts are provided by N11 and N78. C87 serves as the catalytic Proton donor. Substrate contacts are provided by residues 88–89, N163, N199, and 217–218; these read GN and ER. C226 acts as the Proton acceptor in catalysis. 227–228 is a substrate binding site; the sequence is GT.

The protein belongs to the diaminopimelate epimerase family. In terms of assembly, homodimer.

It localises to the cytoplasm. It carries out the reaction (2S,6S)-2,6-diaminopimelate = meso-2,6-diaminopimelate. Its pathway is amino-acid biosynthesis; L-lysine biosynthesis via DAP pathway; DL-2,6-diaminopimelate from LL-2,6-diaminopimelate: step 1/1. Functionally, catalyzes the stereoinversion of LL-2,6-diaminopimelate (L,L-DAP) to meso-diaminopimelate (meso-DAP), a precursor of L-lysine and an essential component of the bacterial peptidoglycan. The chain is Diaminopimelate epimerase from Rhodococcus opacus (strain B4).